Reading from the N-terminus, the 422-residue chain is Beta-1,3-galactosyltransferase 2 (422 aa).

Residues 1-20 lie on the Cytoplasmic side of the membrane; sequence MLQWRRRHCCFAKMTWSPKR. A helical; Signal-anchor for type II membrane protein membrane pass occupies residues 21 to 43; that stretch reads SLLRTPLTGVLSLVFLFAMFLFF. Residues 44–422 lie on the Lumenal side of the membrane; that stretch reads NHHDWLPGRP…AGRYRHRKLH (379 aa). N-linked (GlcNAc...) asparagine glycans are attached at residues Asn-75, Asn-98, Asn-119, Asn-176, and Asn-226. The tract at residues 91–110 is disordered; that stretch reads LRPHTASNSSNTELSPQGVT. A compositionally biased stretch (polar residues) spans 95–110; sequence TASNSSNTELSPQGVT.

It belongs to the glycosyltransferase 31 family. Requires Mn(2+) as cofactor. Detected in brain and heart.

The protein localises to the golgi apparatus membrane. The catalysed reaction is an N-acetyl-beta-D-glucosaminyl derivative + UDP-alpha-D-galactose = a beta-D-galactosyl-(1-&gt;3)-N-acetyl-beta-D-glucosaminyl derivative + UDP + H(+). It catalyses the reaction a beta-D-GlcNAc-(1-&gt;3)-beta-D-Gal-(1-&gt;4)-beta-D-Glc-(1&lt;-&gt;1)-Cer(d18:1(4E)) + UDP-alpha-D-galactose = a beta-D-Gal-(1-&gt;3)-beta-D-GlcNAc-(1-&gt;3)-beta-D-Gal-(1-&gt;4)-beta-D-Glc-(1&lt;-&gt;1')-Cer(d18:1(4E)) + UDP + H(+). The enzyme catalyses a neolactoside IV(3)-beta-GlcNAc-nLc4Cer(d18:1(4E)) + UDP-alpha-D-galactose = a neolactoside IV(3)-beta-[Gal-beta-(1-&gt;3)-GlcNAc]-nLc4Cer(d18:1(4E)) + UDP + H(+). It participates in protein modification; protein glycosylation. Its function is as follows. Beta-1,3-galactosyltransferase that transfers galactose from UDP-galactose to substrates with a terminal beta-N-acetylglucosamine (beta-GlcNAc) residue. Can also utilize substrates with a terminal galactose residue, albeit with lower efficiency. Involved in the biosynthesis of the carbohydrate moieties of glycolipids and glycoproteins. In Mus musculus (Mouse), this protein is Beta-1,3-galactosyltransferase 2.